A 77-amino-acid chain; its full sequence is Translation initiation factor IF-1, chloroplastic (77 aa).

Residues M1–R72 form the S1-like domain.

The protein belongs to the IF-1 family. As to quaternary structure, component of the 30S ribosomal translation pre-initiation complex which assembles on the 30S ribosome in the order IF-2 and IF-3, IF-1 and N-formylmethionyl-tRNA(fMet); mRNA recruitment can occur at any time during PIC assembly.

It localises to the plastid. The protein resides in the chloroplast. One of the essential components for the initiation of protein synthesis. Stabilizes the binding of IF-2 and IF-3 on the 30S subunit to which N-formylmethionyl-tRNA(fMet) subsequently binds. Helps modulate mRNA selection, yielding the 30S pre-initiation complex (PIC). Upon addition of the 50S ribosomal subunit IF-1, IF-2 and IF-3 are released leaving the mature 70S translation initiation complex. The polypeptide is Translation initiation factor IF-1, chloroplastic (Staurastrum punctulatum (Green alga)).